Reading from the N-terminus, the 327-residue chain is Movement protein (327 aa).

Residues 297–327 adopt a coiled-coil conformation; sequence SASSSNTENELARVSQNIDLLKNKLKEICGE.

This sequence belongs to the caulimoviridae movement protein family. Homotrimer, through the coiled-coil domain. Interacts with VAP. May interact (via N-terminus) with host prenylated Rab acceptor protein 1D (PRA1D).

The protein resides in the host cell junction. It is found in the host plasmodesma. Transports viral genome to neighboring plant cells directly through plasmosdesmata, without any budding. The movement protein allows efficient cell to cell propagation, by bypassing the host cell wall barrier. Acts by forming tubules structures that increase the size exclusion limit (SEL) of plasmodesmata, thereby allowing viral ribonucleocapsids to spread directly to neighboring cells. This chain is Movement protein, found in Arabidopsis thaliana (Mouse-ear cress).